Reading from the N-terminus, the 431-residue chain is Gamma-glutamyl phosphate reductase (431 aa).

This sequence belongs to the gamma-glutamyl phosphate reductase family.

The protein localises to the cytoplasm. The enzyme catalyses L-glutamate 5-semialdehyde + phosphate + NADP(+) = L-glutamyl 5-phosphate + NADPH + H(+). It participates in amino-acid biosynthesis; L-proline biosynthesis; L-glutamate 5-semialdehyde from L-glutamate: step 2/2. Its function is as follows. Catalyzes the NADPH-dependent reduction of L-glutamate 5-phosphate into L-glutamate 5-semialdehyde and phosphate. The product spontaneously undergoes cyclization to form 1-pyrroline-5-carboxylate. The polypeptide is Gamma-glutamyl phosphate reductase (Beijerinckia indica subsp. indica (strain ATCC 9039 / DSM 1715 / NCIMB 8712)).